Consider the following 314-residue polypeptide: Methionyl-tRNA formyltransferase (314 aa).

110-113 is a binding site for (6S)-5,6,7,8-tetrahydrofolate; that stretch reads SLLP.

It belongs to the Fmt family.

The enzyme catalyses L-methionyl-tRNA(fMet) + (6R)-10-formyltetrahydrofolate = N-formyl-L-methionyl-tRNA(fMet) + (6S)-5,6,7,8-tetrahydrofolate + H(+). In terms of biological role, attaches a formyl group to the free amino group of methionyl-tRNA(fMet). The formyl group appears to play a dual role in the initiator identity of N-formylmethionyl-tRNA by promoting its recognition by IF2 and preventing the misappropriation of this tRNA by the elongation apparatus. In Dichelobacter nodosus (strain VCS1703A), this protein is Methionyl-tRNA formyltransferase.